A 141-amino-acid chain; its full sequence is Nucleoside diphosphate kinase (141 aa).

Lys11, Phe59, Arg87, Thr93, Arg104, and Asn114 together coordinate ATP. His117 serves as the catalytic Pros-phosphohistidine intermediate.

It belongs to the NDK family. In terms of assembly, homotetramer. The cofactor is Mg(2+).

It is found in the cytoplasm. The enzyme catalyses a 2'-deoxyribonucleoside 5'-diphosphate + ATP = a 2'-deoxyribonucleoside 5'-triphosphate + ADP. The catalysed reaction is a ribonucleoside 5'-diphosphate + ATP = a ribonucleoside 5'-triphosphate + ADP. In terms of biological role, major role in the synthesis of nucleoside triphosphates other than ATP. The ATP gamma phosphate is transferred to the NDP beta phosphate via a ping-pong mechanism, using a phosphorylated active-site intermediate. This chain is Nucleoside diphosphate kinase, found in Pseudomonas syringae pv. tomato (strain ATCC BAA-871 / DC3000).